The chain runs to 261 residues: Putative imidazole glycerol phosphate synthase subunit hisF2 (261 aa).

The active site involves Asp-138.

This sequence belongs to the HisA/HisF family. As to quaternary structure, heterodimer of HisH and HisF.

It is found in the cytoplasm. The catalysed reaction is 5-[(5-phospho-1-deoxy-D-ribulos-1-ylimino)methylamino]-1-(5-phospho-beta-D-ribosyl)imidazole-4-carboxamide + L-glutamine = D-erythro-1-(imidazol-4-yl)glycerol 3-phosphate + 5-amino-1-(5-phospho-beta-D-ribosyl)imidazole-4-carboxamide + L-glutamate + H(+). The protein operates within amino-acid biosynthesis; L-histidine biosynthesis; L-histidine from 5-phospho-alpha-D-ribose 1-diphosphate: step 5/9. Functionally, IGPS catalyzes the conversion of PRFAR and glutamine to IGP, AICAR and glutamate. The HisF subunit catalyzes the cyclization activity that produces IGP and AICAR from PRFAR using the ammonia provided by the HisH subunit. The protein is Putative imidazole glycerol phosphate synthase subunit hisF2 (hisF2) of Prochlorococcus marinus (strain MIT 9313).